The primary structure comprises 304 residues: Methionyl-tRNA formyltransferase (304 aa).

110 to 113 (SLLP) contacts (6S)-5,6,7,8-tetrahydrofolate.

This sequence belongs to the Fmt family.

The enzyme catalyses L-methionyl-tRNA(fMet) + (6R)-10-formyltetrahydrofolate = N-formyl-L-methionyl-tRNA(fMet) + (6S)-5,6,7,8-tetrahydrofolate + H(+). Functionally, attaches a formyl group to the free amino group of methionyl-tRNA(fMet). The formyl group appears to play a dual role in the initiator identity of N-formylmethionyl-tRNA by promoting its recognition by IF2 and preventing the misappropriation of this tRNA by the elongation apparatus. This chain is Methionyl-tRNA formyltransferase, found in Gluconobacter oxydans (strain 621H) (Gluconobacter suboxydans).